The chain runs to 202 residues: Na(+)-translocating NADH-quinone reductase subunit E (202 aa).

6 consecutive transmembrane segments (helical) span residues 11–31 (AVFI…FLAV), 35–55 (VTTS…SVPV), 81–101 (FLRF…LEMA), 114–134 (GIFL…SFMV), 144–164 (VVYG…LAGI), and 180–200 (LGIT…FSGI).

This sequence belongs to the NqrDE/RnfAE family. In terms of assembly, composed of six subunits; NqrA, NqrB, NqrC, NqrD, NqrE and NqrF.

It is found in the cell inner membrane. The catalysed reaction is a ubiquinone + n Na(+)(in) + NADH + H(+) = a ubiquinol + n Na(+)(out) + NAD(+). In terms of biological role, NQR complex catalyzes the reduction of ubiquinone-1 to ubiquinol by two successive reactions, coupled with the transport of Na(+) ions from the cytoplasm to the periplasm. NqrA to NqrE are probably involved in the second step, the conversion of ubisemiquinone to ubiquinol. The protein is Na(+)-translocating NADH-quinone reductase subunit E of Pseudoalteromonas translucida (strain TAC 125).